The primary structure comprises 122 residues: Large ribosomal subunit protein bL12 (122 aa).

This sequence belongs to the bacterial ribosomal protein bL12 family. Homodimer. Part of the ribosomal stalk of the 50S ribosomal subunit. Forms a multimeric L10(L12)X complex, where L10 forms an elongated spine to which 2 to 4 L12 dimers bind in a sequential fashion. Binds GTP-bound translation factors.

Forms part of the ribosomal stalk which helps the ribosome interact with GTP-bound translation factors. Is thus essential for accurate translation. The polypeptide is Large ribosomal subunit protein bL12 (Buchnera aphidicola subsp. Acyrthosiphon pisum (strain Tuc7)).